The chain runs to 195 residues: Meiotically up-regulated gene 84 protein (195 aa).

The Cytoplasmic portion of the chain corresponds to 1 to 84 (MTLTHHSTFI…IMVKVPTYEY (84 aa)). Residues 85–105 (YGFVMYLVSMLGFGVYIVWAL) traverse the membrane as a helical segment. At 106–122 (TPAPVLKFFEIHYYLSR) the chain is on the lumenal side. Residues 123–143 (WWALAIPTWLFVLVIYIHVVL) form a helical membrane-spanning segment. The Cytoplasmic portion of the chain corresponds to 144-195 (NAYNTEVLTKPFSSLECIVDQYALVGEEDGAAHGRVVDLRLCDVNKQQLEET).

The protein resides in the endoplasmic reticulum membrane. Its function is as follows. Has a role in meiosis. This chain is Meiotically up-regulated gene 84 protein (mug84), found in Schizosaccharomyces pombe (strain 972 / ATCC 24843) (Fission yeast).